The sequence spans 280 residues: Urease accessory protein UreD (280 aa).

The protein belongs to the UreD family. As to quaternary structure, ureD, UreF and UreG form a complex that acts as a GTP-hydrolysis-dependent molecular chaperone, activating the urease apoprotein by helping to assemble the nickel containing metallocenter of UreC. The UreE protein probably delivers the nickel.

Its subcellular location is the cytoplasm. Its function is as follows. Required for maturation of urease via the functional incorporation of the urease nickel metallocenter. In Staphylococcus saprophyticus subsp. saprophyticus (strain ATCC 15305 / DSM 20229 / NCIMB 8711 / NCTC 7292 / S-41), this protein is Urease accessory protein UreD.